A 240-amino-acid polypeptide reads, in one-letter code: Adenosylcobinamide-GDP ribazoletransferase (240 aa).

5 helical membrane passes run 31-51, 62-81, 109-129, 133-153, and 179-199; these read LLYY…ASHL, ALLL…DGLA, IAVV…WVLV, IGAQ…GLFL, and VLLV…LLAL.

It belongs to the CobS family. It depends on Mg(2+) as a cofactor.

It is found in the cell inner membrane. The enzyme catalyses alpha-ribazole + adenosylcob(III)inamide-GDP = adenosylcob(III)alamin + GMP + H(+). The catalysed reaction is alpha-ribazole 5'-phosphate + adenosylcob(III)inamide-GDP = adenosylcob(III)alamin 5'-phosphate + GMP + H(+). It participates in cofactor biosynthesis; adenosylcobalamin biosynthesis; adenosylcobalamin from cob(II)yrinate a,c-diamide: step 7/7. Functionally, joins adenosylcobinamide-GDP and alpha-ribazole to generate adenosylcobalamin (Ado-cobalamin). Also synthesizes adenosylcobalamin 5'-phosphate from adenosylcobinamide-GDP and alpha-ribazole 5'-phosphate. The sequence is that of Adenosylcobinamide-GDP ribazoletransferase from Pseudomonas putida (strain ATCC 47054 / DSM 6125 / CFBP 8728 / NCIMB 11950 / KT2440).